Here is a 469-residue protein sequence, read N- to C-terminus: Collagenase 3 (469 aa).

Positions 1-17 are cleaved as a signal peptide; the sequence is SSLSVLVLSLSFAYCLS. The propeptide at 18–100 is activation peptide; sequence APVPQDEDSE…QPRCGVPDVG (83 aa). The Cysteine switch signature appears at 92–99; the sequence is PRCGVPDV. Position 94 (Cys-94) interacts with Zn(2+). The N-linked (GlcNAc...) asparagine glycan is linked to Asn-115. Asp-126 is a Ca(2+) binding site. N-linked (GlcNAc...) asparagine glycosylation is present at Asn-150. Asp-160 provides a ligand contact to Ca(2+). Zn(2+)-binding residues include His-170 and Asp-172. Ca(2+)-binding residues include Asp-177, Gly-178, and Leu-182. His-185 contributes to the Zn(2+) binding site. Residues Gly-194 and Asp-196 each contribute to the Ca(2+) site. Zn(2+) is bound at residue His-198. Residues Asp-200, Asp-201, and Glu-203 each contribute to the Ca(2+) site. His-220 contributes to the Zn(2+) binding site. The active site involves Glu-221. Zn(2+) contacts are provided by His-224, His-230, and Met-238. An interaction with collagen region spans residues 266-469; it reads PGNRDPHPKH…ILKTNFVLMC (204 aa). 4 Hemopexin repeats span residues 279 to 328, 329 to 375, 377 to 425, and 426 to 469; these read PEKC…WPEL, PNKL…GFPK, LKAI…FPGI, and GEKV…VLMC. A disulfide bridge links Cys-282 with Cys-469. The Ca(2+) site is built by Asp-289, Ile-291, Asp-333, Ala-335, Ala-383, and Asp-430.

The protein belongs to the peptidase M10A family. Ca(2+) is required as a cofactor. It depends on Zn(2+) as a cofactor. In terms of processing, the proenzyme is activated by removal of the propeptide; this cleavage can be effected by other matrix metalloproteinases and may involve several cleavage steps. Cleavage can also be autocatalytic, after partial maturation by another protease or after treatment with 4-aminophenylmercuric acetate (APMA) (in vitro).

It is found in the secreted. It localises to the extracellular space. The protein resides in the extracellular matrix. Its function is as follows. Plays a role in the degradation of extracellular matrix proteins including fibrillar collagen, fibronectin, TNC and ACAN. Cleaves several types of triple helical collagen. May also function by activating or degrading key regulatory proteins. Plays a role in wound healing, tissue remodeling, cartilage degradation, bone development, bone mineralization and ossification. The chain is Collagenase 3 (mmp13) from Xenopus laevis (African clawed frog).